Consider the following 430-residue polypeptide: Cyclin-A2 (430 aa).

Position 1 is an N-acetylmethionine (Met-1). Disordered regions lie at residues 1 to 80 (MLGS…PIND) and 106 to 129 (EEIQKRPTESKKSESEDVLAFNSA). Ser-5 is modified (phosphoserine). A compositionally biased stretch (basic and acidic residues) spans 107–120 (EIQKRPTESKKSES).

Belongs to the cyclin family. Cyclin AB subfamily. In terms of assembly, interacts with the CDK1 and CDK2 protein kinases to form serine/threonine kinase holoenzyme complexes. Interacts with CDK1 (hyperphosphorylated form in G1 and underphosphorylated forms in S and G2). Interacts with CDK2; the interaction increases from G1 to G2. Interacts (associated with CDK2 but not with CDK1) with SCAPER; regulates the activity of CCNA2/CDK2 by transiently maintaining CCNA2 in the cytoplasm. Forms a ternary complex with CDK2 and CDKN1B; CDKN1B inhibits the kinase activity of CDK2 through conformational rearrangements. Interacts with INCA1. Post-translationally, polyubiquitinated via 'Lys-11'-linked ubiquitin by the anaphase-promoting complex (APC/C), leading to its degradation by the proteasome. Deubiquitinated and stabilized by USP37 enables entry into S phase. Ubiquitinated during the G1 phase by the SCF(FBXO31) complex, leading to its proteasomal degradation.

The protein resides in the nucleus. Its subcellular location is the cytoplasm. Cyclin which controls both the G1/S and the G2/M transition phases of the cell cycle. Functions through the formation of specific serine/threonine kinase holoenzyme complexes with the cyclin-dependent protein kinases CDK1 and CDK2. The cyclin subunit confers the substrate specificity of these complexes and differentially interacts with and activates CDK1 and CDK2 throughout the cell cycle. In Bos taurus (Bovine), this protein is Cyclin-A2.